We begin with the raw amino-acid sequence, 208 residues long: Effector protein MavE (208 aa).

The short motif at 77–80 (NPRY) is the NPxY eukaryotic motif element. The helical transmembrane segment at 184-204 (VLFPFVAATVAVAATAASVLF) threads the bilayer.

In terms of assembly, homotrimer.

The protein resides in the secreted. It is found in the host vacuole. Its subcellular location is the host pathogen-containing vacuole. The protein localises to the host pathogen-containing vacuole membrane. Functionally, virulence effector that is indispensable for endoplasmic reticulum (ER)-mediated remodeling of the Legionella pneumophila-containing vacuole (LCV) and lysosomal evasion. Essential for intracellular replication in human monocyte-derived macrophages (hMDMs) and amoebae, as well as for intrapulmonary proliferation in mice. This chain is Effector protein MavE, found in Legionella pneumophila subsp. pneumophila (strain Philadelphia 1 / ATCC 33152 / DSM 7513).